Reading from the N-terminus, the 313-residue chain is Pre-mRNA-splicing factor 38A (313 aa).

Positions 1 to 179 are N-terminal protein interaction domain; the sequence is MANRTVKDAN…VLEEAELLDP (179 aa). Positions 172 to 201 form a coiled coil; the sequence is EEAELLDPRISALEEDLDEVETSEEEDDED. The disordered stretch occupies residues 182 to 313; the sequence is SALEEDLDEV…SHKRSRRGNE (132 aa). The span at 184–202 shows a compositional bias: acidic residues; the sequence is LEEDLDEVETSEEEDDEDE. Positions 203–224 are enriched in basic and acidic residues; sequence KPERMQSPEPHRRSYRDMDRPR. 3 stretches are compositionally biased toward basic residues: residues 225-250, 260-294, and 302-313; these read RSPSPRYRRSRSPRRRSRSPKRRSPS, HRSKSPRRHRSRSRERRHRSKSPGHHRSHRHRSHS, and KKSHKRSRRGNE.

This sequence belongs to the PRP38 family. In terms of assembly, component of the spliceosome B complex.

Its subcellular location is the nucleus. Involved in pre-mRNA splicing as a component of the spliceosome. The polypeptide is Pre-mRNA-splicing factor 38A (prpf38a) (Danio rerio (Zebrafish)).